Here is a 173-residue protein sequence, read N- to C-terminus: Alpha-crystallin A chain (173 aa).

Met1 is modified (N-acetylmethionine). Residues 1-63 form a required for complex formation with BFSP1 and BFSP2; during homooligomerization, mediates the association of 2 dimers to form a tetramer region; sequence MDVTIQHPWF…RTVLDSGISE (63 aa). The residue at position 6 (Gln6) is a Deamidated glutamine; partial. The residue at position 45 (Ser45) is a Phosphoserine. A Deamidated glutamine; partial modification is found at Gln50. The sHSP domain maps to 52 to 164; sequence LFRTVLDSGI…AERAIPVSRE (113 aa). Lys70 carries the N6-acetyllysine modification. Position 90 is a deamidated glutamine; partial (Gln90). Lys99 bears the N6-acetyllysine mark. Zn(2+) is bound at residue His100. A Deamidated asparagine; partial modification is found at Asn101. 2 residues coordinate Zn(2+): Glu102 and His107. Phosphoserine is present on Ser122. Residue Asn123 is modified to Deamidated asparagine; partial. A disulfide bridge connects residues Cys131 and Cys142. Deamidated glutamine; partial is present on Gln147. His154 is a Zn(2+) binding site. Ser162 carries O-linked (GlcNAc) serine glycosylation.

The protein belongs to the small heat shock protein (HSP20) family. Heteropolymer composed of three CRYAA and one CRYAB subunits. Inter-subunit bridging via zinc ions enhances stability, which is crucial as there is no protein turn over in the lens. Can also form homodimers and homotetramers (dimers of dimers) which serve as the building blocks of homooligomers. Within homooligomers, the zinc-binding motif is created from residues of 3 different molecules. His-100 and Glu-102 from one molecule are ligands of the zinc ion, and His-107 and His-154 residues from additional molecules complete the site with tetrahedral coordination geometry. Part of a complex required for lens intermediate filament formation composed of BFSP1, BFSP2 and CRYAA. O-glycosylated; contains N-acetylglucosamine side chains. In terms of processing, deamidation of Asn-101 in lens occurs mostly during the first 30 years of age, followed by a small additional amount of deamidation (approximately 5%) during the next approximately 38 years, resulting in a maximum of approximately 50% deamidation during the lifetime of the individual. Post-translationally, phosphorylation on Ser-122 seems to be developmentally regulated. Absent in the first months of life, it appears during the first 12 years of human lifetime. The relative amount of phosphorylated form versus unphosphorylated form does not change over the lifetime of the individual. Acetylation at Lys-70 may increase chaperone activity. In terms of processing, undergoes age-dependent proteolytical cleavage at the C-terminus. Alpha-crystallin A(1-172) is the most predominant form produced most rapidly during the first 12 years of age and after this age is present in approximately 50% of the lens molecules. Post-translationally, in young individuals and during the first approximately 30 years of life, less than half molecules contain an intramolecular disulfide bond (oxidized form), while in the remaining fraction the cysteines are in the free sulfhydryl form (reduced form). With aging, the amount of oxidized form increases up to 90% and it becomes a major constituent of high molecular weight aggregates, concomitant with an age-dependent loss of its chaperone activity. The reduced form is undetectable in cataractous lenses. As to expression, expressed in the eye lens (at protein level).

Its subcellular location is the cytoplasm. It is found in the nucleus. Contributes to the transparency and refractive index of the lens. In its oxidized form (absence of intramolecular disulfide bond), acts as a chaperone, preventing aggregation of various proteins under a wide range of stress conditions. Required for the correct formation of lens intermediate filaments as part of a complex composed of BFSP1, BFSP2 and CRYAA. The polypeptide is Alpha-crystallin A chain (CRYAA) (Homo sapiens (Human)).